A 108-amino-acid polypeptide reads, in one-letter code: Circadian clock oscillator protein KaiB (108 aa).

It belongs to the KaiB family. In terms of assembly, undergoes a major conformational rearrangment; in the free state forms homotetramers with 2 dimers. When bound to the CI domain of KaiC, KaiA or CikA switches to a monomeric thioredoxin-fold (KaiB(fs)). The KaiABC complex composition changes during the circadian cycle to control KaiC phosphorylation. Complexes KaiC(6), KaiA(2-4):KaiC(6), KaiB(6):KaiC(6) and KaiC(6):KaiB(6):KaiA(12) are among the most important forms, many form cooperatively. Binds to KaiA; 1 KaiB(fs) binds to the KaiA homodimer. Binds to the B-loop in the CI domain of KaiC; SasA and KaiB compete to bind to the CI domain. Binding to KaiC CI domain occurs 1:1. KaiA and CikA bind to the same region of KaiB(fs) and therefore compete.

Functionally, key component of the KaiABC oscillator complex, which constitutes the main circadian regulator in cyanobacteria. Its composition changes during the circadian cycle to control KaiC phosphorylation. KaiA stimulates KaiC autophosphorylation, while KaiB sequesters KaiA, leading to KaiC autodephosphorylation. KaiA binding to KaiC yields KaiA(2-4):KaiC(6) complexes which stimulate KaiC autophosphorylation. Phospho-Ser-431 KaiC accumulation triggers binding of KaiB to form the KaiB(6):KaiC(6) complex, leading to changes in the output regulators CikA and SasA. KaiB switches to a thioredoxin-like fold (KaiB(fs)) in complex with KaiC. KaiB(6):KaiC(6) formation exposes a site for KaiA binding that sequesters KaiA from the CII domain, making the KaiC(6):KaiB(6):KaiA(12) complex that results in KaiC autodephosphorylation. Complete dephosphorylation of KaiC leads to dissociation of KaiA(2):KaiB(1), completing 1 cycle of the Kai oscillator. A metamorphic protein which reversibly switches between an inactive tetrameric fold and a rare, thioredoxin-like monomeric fold (KaiB(fs)). KaiB(fs) binds phospho-KaiC, KaiA and CikA. KaiA and CikA compete for binding to KaiB(fs), and KaiB(fs) and SasA compete for binding to KaiC, thus the clock oscillator and output signal pathway are tightly coupled. The sequence is that of Circadian clock oscillator protein KaiB from Thermosynechococcus vestitus (strain NIES-2133 / IAM M-273 / BP-1).